A 264-amino-acid polypeptide reads, in one-letter code: Acyl-[acyl-carrier-protein]--UDP-N-acetylglucosamine O-acyltransferase (264 aa).

Belongs to the transferase hexapeptide repeat family. LpxA subfamily. As to quaternary structure, homotrimer.

It localises to the cytoplasm. The enzyme catalyses a (3R)-hydroxyacyl-[ACP] + UDP-N-acetyl-alpha-D-glucosamine = a UDP-3-O-[(3R)-3-hydroxyacyl]-N-acetyl-alpha-D-glucosamine + holo-[ACP]. It participates in glycolipid biosynthesis; lipid IV(A) biosynthesis; lipid IV(A) from (3R)-3-hydroxytetradecanoyl-[acyl-carrier-protein] and UDP-N-acetyl-alpha-D-glucosamine: step 1/6. Involved in the biosynthesis of lipid A, a phosphorylated glycolipid that anchors the lipopolysaccharide to the outer membrane of the cell. This Chlorobaculum tepidum (strain ATCC 49652 / DSM 12025 / NBRC 103806 / TLS) (Chlorobium tepidum) protein is Acyl-[acyl-carrier-protein]--UDP-N-acetylglucosamine O-acyltransferase.